Here is a 311-residue protein sequence, read N- to C-terminus: 4-diphosphocytidyl-2-C-methyl-D-erythritol kinase (311 aa).

Lys-16 is an active-site residue. Position 100–110 (100–110 (PIGAGLAGGSS)) interacts with ATP. Asp-142 is an active-site residue.

The protein belongs to the GHMP kinase family. IspE subfamily.

It catalyses the reaction 4-CDP-2-C-methyl-D-erythritol + ATP = 4-CDP-2-C-methyl-D-erythritol 2-phosphate + ADP + H(+). It participates in isoprenoid biosynthesis; isopentenyl diphosphate biosynthesis via DXP pathway; isopentenyl diphosphate from 1-deoxy-D-xylulose 5-phosphate: step 3/6. Functionally, catalyzes the phosphorylation of the position 2 hydroxy group of 4-diphosphocytidyl-2C-methyl-D-erythritol. In Prochlorococcus marinus (strain MIT 9312), this protein is 4-diphosphocytidyl-2-C-methyl-D-erythritol kinase.